The chain runs to 537 residues: Glutamyl-tRNA reductase, chloroplastic (537 aa).

The transit peptide at 1–48 (MMASTTSATAAGGAFAAAKTRAGSSAAGGGACARVAAGGRRRSGVVVR) directs the protein to the chloroplast. Substrate-binding positions include 134 to 137 (TCNR), serine 194, 199 to 201 (EGQ), and glutamine 205. Catalysis depends on cysteine 135, which acts as the Nucleophile. 276 to 281 (GAGKMG) contributes to the NADP(+) binding site.

The protein belongs to the glutamyl-tRNA reductase family.

It is found in the plastid. The protein localises to the chloroplast. It carries out the reaction (S)-4-amino-5-oxopentanoate + tRNA(Glu) + NADP(+) = L-glutamyl-tRNA(Glu) + NADPH + H(+). The protein operates within porphyrin-containing compound metabolism; protoporphyrin-IX biosynthesis; 5-aminolevulinate from L-glutamyl-tRNA(Glu): step 1/2. Catalyzes the NADPH-dependent reduction of glutamyl-tRNA(Glu) to glutamate 1-semialdehyde (GSA). This Oryza sativa subsp. indica (Rice) protein is Glutamyl-tRNA reductase, chloroplastic.